Reading from the N-terminus, the 225-residue chain is Thaumatin-like protein (225 aa).

Positions 1-24 are cleaved as a signal peptide; that stretch reads MSTFKSLSLSALLFIAFLFTCARG. Intrachain disulfides connect C33/C224, C74/C84, C89/C95, C140/C213, C146/C196, C154/C164, C168/C177, and C178/C183.

Belongs to the thaumatin family. Post-translationally, N-glycosylated.

It localises to the secreted. In terms of biological role, has antifungal activity against B.cinerea, C.comatus, M.arachidicola, P.piricola, C.albicans and S.carlsbergensis. Inhibits HIV-1 reverse transcriptase. The polypeptide is Thaumatin-like protein (Actinidia chinensis var. chinensis (Chinese soft-hair kiwi)).